The following is a 125-amino-acid chain: Small ribosomal subunit protein mS41 (125 aa).

The transit peptide at 1-23 directs the protein to the mitochondrion; that stretch reads MLFRRLFSSSVIVQAASKTSLRK.

It belongs to the mitochondrion-specific ribosomal protein mS41 family.

Its subcellular location is the mitochondrion. Involved in telomere length regulation. The chain is Small ribosomal subunit protein mS41 (FYV4) from Kluyveromyces lactis (strain ATCC 8585 / CBS 2359 / DSM 70799 / NBRC 1267 / NRRL Y-1140 / WM37) (Yeast).